A 561-amino-acid polypeptide reads, in one-letter code: 4-coumarate--CoA ligase 3 (561 aa).

Positions 213, 214, 215, 216, 217, and 221 each coordinate ATP. Positions 263 and 267 each coordinate (E)-4-coumaroyl-AMP. Lysine 284 lines the CoA pocket. The segment at glutamate 286 to glutamine 355 is SBD1. (E)-4-coumaroyl-AMP contacts are provided by alanine 333, glutamine 355, glycine 356, threonine 360, and methionine 368. 3 residues coordinate ATP: glutamine 355, glycine 356, and threonine 360. The interval glycine 356–tyrosine 423 is SBD2. Residues aspartate 444 and arginine 459 each contribute to the ATP site. Lysine 461 and lysine 465 together coordinate (E)-4-coumaroyl-AMP. CoA contacts are provided by lysine 467 and glycine 468. Residue lysine 550 coordinates ATP.

This sequence belongs to the ATP-dependent AMP-binding enzyme family. It depends on Mg(2+) as a cofactor. In terms of tissue distribution, preferentially expressed in leaves, flowers and siliques.

It catalyses the reaction (E)-4-coumarate + ATP + CoA = (E)-4-coumaroyl-CoA + AMP + diphosphate. It carries out the reaction (E)-caffeate + ATP + CoA = (E)-caffeoyl-CoA + AMP + diphosphate. The catalysed reaction is (E)-ferulate + ATP + CoA = (E)-feruloyl-CoA + AMP + diphosphate. The enzyme catalyses (E)-4-coumarate + ATP + H(+) = (E)-4-coumaroyl-AMP + diphosphate. It catalyses the reaction (E)-4-coumaroyl-AMP + CoA = (E)-4-coumaroyl-CoA + AMP + H(+). It carries out the reaction (E)-caffeate + ATP + H(+) = (E)-caffeoyl-AMP + diphosphate. The catalysed reaction is (E)-caffeoyl-AMP + CoA = (E)-caffeoyl-CoA + AMP + H(+). The enzyme catalyses (E)-ferulate + ATP + H(+) = (E)-feruloyl-AMP + diphosphate. It catalyses the reaction (E)-feruloyl-AMP + CoA = (E)-feruloyl-CoA + AMP + H(+). It functions in the pathway phytoalexin biosynthesis; 3,4',5-trihydroxystilbene biosynthesis; 3,4',5-trihydroxystilbene from trans-4-coumarate: step 1/2. In terms of biological role, produces CoA thioesters of a variety of hydroxy- and methoxy-substituted cinnamic acids, which are used to synthesize several phenylpropanoid-derived compounds, including anthocyanins, flavonoids, isoflavonoids, coumarins, lignin, suberin and wall-bound phenolics. Follows a two-step reaction mechanism, wherein the carboxylate substrate first undergoes adenylation by ATP, followed by a thioesterification in the presence of CoA to yield the final CoA thioesters. The protein is 4-coumarate--CoA ligase 3 of Arabidopsis thaliana (Mouse-ear cress).